The sequence spans 657 residues: L-glutamate oxidase precursor (657 aa).

Residues 1–12 form the signal peptide; that stretch reads MTETPRDNSATR. Residues E86, A87, R95, M120, R121, M350, E639, W647, and I648 each contribute to the FAD site.

This sequence belongs to the flavin monoamine oxidase family. LGOX subfamily. As to quaternary structure, the mature enzyme is a heterohexamer composed of 2 alpha chains, 2 beta chains and 2 gamma chains (alpha2beta2gamma2). FAD is required as a cofactor. Post-translationally, the precursor form is proteolytically cleaved by an endopeptidase into alpha, beta and gamma chains, which form the stable mature enzyme.

It is found in the secreted. The enzyme catalyses L-glutamate + O2 + H2O = H2O2 + 2-oxoglutarate + NH4(+). With respect to regulation, proteinase K-treated enzyme exhibits improved affinity for the substrate, increased activity and increased thermostability. Its function is as follows. Catalyzes the oxidative deamination of L-glutamate to 2-ketoglutarate along with the production of ammonia and hydrogen peroxide. Exhibits strict specificity for L-glutamate, and shows only very weak activity with L-glutamine. The sequence is that of L-glutamate oxidase precursor from Streptomyces diastatochromogenes.